A 601-amino-acid chain; its full sequence is Leucine-rich repeat-containing protein 40 (601 aa).

21 LRR repeats span residues 33 to 56 (ARKS…VWRL), 79 to 101 (QTDL…DVKL), 102 to 124 (LPAL…SIGD), 125 to 148 (LEQL…VWRL), 150 to 170 (NLRC…DLGQ), 171 to 193 (LVNL…SLAN), 194 to 217 (LQNL…ISQM), 219 to 239 (NLRM…VLAQ), 240 to 264 (MESL…CCKT), 266 to 285 (KELH…HLKH), 286 to 308 (LNAL…EITL), 309 to 334 (LQGL…TLPK), 336 to 355 (KSLS…LLTK), 397 to 420 (IKTL…VFDA), 423 to 446 (GNPV…IVDL), 447 to 469 (KDSL…DFCH), 470 to 492 (LKQL…ELEG), 493 to 516 (LIKL…LYRI), 518 to 539 (SLET…QMKT), 540 to 563 (LSRL…LGNC), and 565 to 586 (SLRA…ILIK).

The protein is Leucine-rich repeat-containing protein 40 (lrrc40) of Danio rerio (Zebrafish).